A 92-amino-acid polypeptide reads, in one-letter code: Small ribosomal subunit protein uS19c (92 aa).

It belongs to the universal ribosomal protein uS19 family.

It localises to the plastid. It is found in the chloroplast. In terms of biological role, protein S19 forms a complex with S13 that binds strongly to the 16S ribosomal RNA. In Gossypium barbadense (Sea Island cotton), this protein is Small ribosomal subunit protein uS19c.